Consider the following 301-residue polypeptide: Small ribosomal subunit protein uS2 (301 aa).

It belongs to the universal ribosomal protein uS2 family. In terms of assembly, component of the small ribosomal subunit. Mature ribosomes consist of a small (40S) and a large (60S) subunit. The 40S subunit contains about 33 different proteins and 1 molecule of RNA (18S). The 60S subunit contains about 49 different proteins and 3 molecules of RNA (28S, 5.8S and 5S). Interacts with ribosomal protein S21.

Its subcellular location is the cytoplasm. Required for the assembly and/or stability of the 40S ribosomal subunit. Required for the processing of the 20S rRNA-precursor to mature 18S rRNA in a late step of the maturation of 40S ribosomal subunits. This Brugia malayi (Filarial nematode worm) protein is Small ribosomal subunit protein uS2.